Here is a 303-residue protein sequence, read N- to C-terminus: Glutamate formimidoyltransferase (303 aa).

Histidine 81 serves as the catalytic For formimidoyltransferase activity. Residue 164 to 172 participates in folate binding; the sequence is GPSVVGKAG.

This sequence belongs to the formiminotransferase family.

It is found in the cytoplasm. The catalysed reaction is (6S)-5-formyl-5,6,7,8-tetrahydrofolate + L-glutamate = N-formyl-L-glutamate + (6S)-5,6,7,8-tetrahydrofolate + H(+). It carries out the reaction 5-formimidoyltetrahydrofolate + L-glutamate = N-formimidoyl-L-glutamate + (6S)-5,6,7,8-tetrahydrofolate. The enzyme catalyses (6S)-5-formyl-5,6,7,8-tetrahydrofolate + ATP = (6R)-5,10-methenyltetrahydrofolate + ADP + phosphate. It participates in amino-acid degradation; L-histidine degradation into L-glutamate; L-glutamate from N-formimidoyl-L-glutamate (transferase route): step 1/1. It functions in the pathway one-carbon metabolism; tetrahydrofolate interconversion. Its function is as follows. Catalyzes the transfer of the formyl group from N-formylglutamate to tetrahydrofolate (THF) to yield 5-formyltetrahydrofolate (5-CHO-THF) and glutamate (Glu). The triglutamate form of 5-CHO-THF (5-CHO-THF-Glu3) can also be used as substrate. It can also catalyze the transfer of the formimino group from N-formiminoglutamate to tetrahydrofolate (THF) to yield 5-formiminotetrahydrofolate (5-NH=CH-THF) and glutamate (Glu). It can replace YgfA to catalyze the irreversible ATP-dependent transformation of 5-CHO-THF to form 5,10-methenyltetrahydrofolate (5,10-CH=THF). In Thermoplasma acidophilum (strain ATCC 25905 / DSM 1728 / JCM 9062 / NBRC 15155 / AMRC-C165), this protein is Glutamate formimidoyltransferase.